Consider the following 1135-residue polypeptide: MSLQMPIPRKKALTVSHFSITLSLFLAFFISSTSASTNEVSALISWLHSSNSPPPSVFSGWNPSDSDPCQWPYITCSSSDNKLVTEINVVSVQLALPFPPNISSFTSLQKLVISNTNLTGAISSEIGDCSELIVIDLSSNSLVGEIPSSLGKLKNLQELCLNSNGLTGKIPPELGDCVSLKNLEIFDNYLSENLPLELGKISTLESIRAGGNSELSGKIPEEIGNCRNLKVLGLAATKISGSLPVSLGQLSKLQSLSVYSTMLSGEIPKELGNCSELINLFLYDNDLSGTLPKELGKLQNLEKMLLWQNNLHGPIPEEIGFMKSLNAIDLSMNYFSGTIPKSFGNLSNLQELMLSSNNITGSIPSILSNCTKLVQFQIDANQISGLIPPEIGLLKELNIFLGWQNKLEGNIPDELAGCQNLQALDLSQNYLTGSLPAGLFQLRNLTKLLLISNAISGVIPLEIGNCTSLVRLRLVNNRITGEIPKGIGFLQNLSFLDLSENNLSGPVPLEISNCRQLQMLNLSNNTLQGYLPLSLSSLTKLQVLDVSSNDLTGKIPDSLGHLISLNRLILSKNSFNGEIPSSLGHCTNLQLLDLSSNNISGTIPEELFDIQDLDIALNLSWNSLDGFIPERISALNRLSVLDISHNMLSGDLSALSGLENLVSLNISHNRFSGYLPDSKVFRQLIGAEMEGNNGLCSKGFRSCFVSNSSQLTTQRGVHSHRLRIAIGLLISVTAVLAVLGVLAVIRAKQMIRDDNDSETGENLWTWQFTPFQKLNFTVEHVLKCLVEGNVIGKGCSGIVYKAEMPNREVIAVKKLWPVTVPNLNEKTKSSGVRDSFSAEVKTLGSIRHKNIVRFLGCCWNKNTRLLMYDYMSNGSLGSLLHERSGVCSLGWEVRYKIILGAAQGLAYLHHDCVPPIVHRDIKANNILIGPDFEPYIGDFGLAKLVDDGDFARSSNTIAGSYGYIAPEYGYSMKITEKSDVYSYGVVVLEVLTGKQPIDPTIPDGLHIVDWVKKIRDIQVIDQGLQARPESEVEEMMQTLGVALLCINPIPEDRPTMKDVAAMLSEICQEREESMKVDGCSGSCNNGRERGKDDSTSSVMQQTAKYLRSSSTSFSASSLLYSSSSSATSNVRPNLK.

Positions Met1–Ala35 are cleaved as a signal peptide. The Extracellular segment spans residues Ser36–Arg723. A disulfide bond links Cys69 and Cys76. N-linked (GlcNAc...) asparagine glycans are attached at residues Asn101 and Asn117. LRR repeat units follow at residues Phe105–Cys129, Ser130–Leu153, Lys154–Cys177, and Ser179–Thr203. Short sequence motifs (small peptide recognition) lie at residues Phe186–Asp187, Arg208–Gly211, Val231–Ala236, and Tyr259. LRR repeat units lie at residues Cys226–Leu250, Ser251–Cys274, Glu276–Leu298, Gln299–Lys323, Leu325–Asn345, Leu346–Cys370, Lys372–Lys395, Leu397–Cys418, Gln419–Leu442, Asn444–Cys466, Thr467–Leu490, Gln491–Cys514, Gln516–Leu538, Thr539–Leu562, Ser564–Cys586, Thr587–Ile610, Asp612–Ala634, Leu635–Leu658, and Glu659–Gln683. A glycan (N-linked (GlcNAc...) asparagine) is linked at Asn273. The Small peptide recognition motif lies at Phe281–Tyr283. The Small peptide recognition motif lies at Asp329–Met332. Asn345 carries N-linked (GlcNAc...) asparagine glycosylation. Positions Glu351–Met353 match the Small peptide recognition motif. Residues Asn358 and Asn369 are each glycosylated (N-linked (GlcNAc...) asparagine). Short sequence motifs (small peptide recognition) lie at residues Ile399–Trp403 and Asp425–Gln428. The N-linked (GlcNAc...) asparagine glycan is linked to Asn444. Residues Lys447–Ile451 carry the Small peptide recognition motif. The N-linked (GlcNAc...) asparagine glycan is linked to Asn465. A Small peptide recognition motif is present at residues Arg471 to Arg473. Asn492, Asn502, Asn521, and Asn524 each carry an N-linked (GlcNAc...) asparagine glycan. Residues Asn598 and Asn618 are each glycosylated (N-linked (GlcNAc...) asparagine). 2 N-linked (GlcNAc...) asparagine glycosylation sites follow: Asn665 and Asn707. A helical membrane pass occupies residues Ile724–Val744. The Cytoplasmic portion of the chain corresponds to Ile745 to Lys1135. Thr777 is subject to Phosphothreonine. In terms of domain architecture, Protein kinase spans Leu785 to Ile1066. ATP contacts are provided by residues Ile791–Val799 and Lys813. Residues Tyr868 and Tyr907 each carry the phosphotyrosine modification. The Proton acceptor role is filled by Asp920. 2 positions are modified to phosphotyrosine: Tyr963 and Tyr970. Positions Asp1077–Lys1135 are disordered. Over residues Ser1108–Ser1128 the composition is skewed to low complexity.

Belongs to the protein kinase superfamily. Ser/Thr protein kinase family. Binds to RGF peptides such as RGF1, GLV5/CLEL1/RGF2, GLV7/CLEL3/RGF3, GLV3/RGF4, GLV10/CLEL7/RGF5 and RGF10/CLELN; these interactions trigger the formation of heterodimers with SERK1. Interacts with UBP13. In terms of processing, phosphorylated and ubiquitinated upon interaction with RGF1, thus leading to activation a subsequent degradation. Stabilized by UBP12 and UBP13-mediated deubiquitination. Post-translationally, autophosphorylated. Specific to root meristems, especially in lateral root meristems (LRM).

It is found in the membrane. The catalysed reaction is L-seryl-[protein] + ATP = O-phospho-L-seryl-[protein] + ADP + H(+). The enzyme catalyses L-threonyl-[protein] + ATP = O-phospho-L-threonyl-[protein] + ADP + H(+). Together with RGI1, RGI3, RGI4 and RGI5, acts as a receptor of RGF peptides (e.g. RGF1, GLV5/CLEL1/RGF2, GLV7/CLEL3/RGF3, GLV3/RGF4, GLV10/CLEL7/RGF5 and RGF10/CLELN), peptide hormones which maintain the postembryonic root stem cell niche by regulating the expression levels and patterns of the transcription factor PLETHORA (PLT, e.g. PLT1 and PLT2). Links RGF peptides signal with their downstream components. The chain is LRR receptor-like serine/threonine-protein kinase RGI2 from Arabidopsis thaliana (Mouse-ear cress).